A 404-amino-acid polypeptide reads, in one-letter code: MSGEKRYLTAGLPGTGGTIKETADDFVVEEIPLYLPCGEGEHVYALIEKRGVTTLDAIRRLARALKLSERDVGYAGMKDARGVTRQTVSLPRMKPEEVLALELPGIRILSAERHRNKLKLGHLAGNRFRIRVRGVVSDAVARAEAILAVLERRGVPNRFGEQRYGAQGNSHLIGRAMLAGDWCAAVDLLMGDPAKVTGEAWRSAIEAYQRGELEESQRLFPGHCRTERDVIQRLVKRPDDFEGAFRAVNPRLRKLYLSACQSALFDHVVEARLDSLDTVQEGDLAWKHANGACFLVTDPAAEAPRAEHFEISPTGPLFGCRMMMPEGEEGALERSLLAAEGVEPASFDLPGGLRMEGERRPLRVPLGDPRASADADGLVLEFSLPKGSYATAVLREVMKGGRPD.

The active-site Nucleophile is Asp-79. In terms of domain architecture, TRUD spans 154-364 (GVPNRFGEQR…MEGERRPLRV (211 aa)).

The protein belongs to the pseudouridine synthase TruD family.

It carries out the reaction uridine(13) in tRNA = pseudouridine(13) in tRNA. In terms of biological role, responsible for synthesis of pseudouridine from uracil-13 in transfer RNAs. The protein is tRNA pseudouridine synthase D of Geobacter metallireducens (strain ATCC 53774 / DSM 7210 / GS-15).